The primary structure comprises 265 residues: Mlc titration factor A (265 aa).

The Zn(2+) site is built by His111, His148, His152, and Glu211.

The protein belongs to the MtfA family. In terms of assembly, interacts with Mlc. The cofactor is Zn(2+).

It is found in the cytoplasm. Its function is as follows. Involved in the modulation of the activity of the glucose-phosphotransferase system (glucose-PTS). Interacts with the transcriptional repressor Mlc, preventing its interaction with DNA and leading to the modulation of expression of genes regulated by Mlc, including ptsG, which encodes the PTS system glucose-specific EIICB component. In terms of biological role, shows zinc-dependent metallopeptidase activity. The polypeptide is Mlc titration factor A (Enterobacter sp. (strain 638)).